A 517-amino-acid polypeptide reads, in one-letter code: Ammonium transporter 3 (517 aa).

Residues 1 to 32 lie on the Extracellular side of the membrane; sequence MLNEPNALLRRDANSTIATVTELFPNEYSNAD. The helical transmembrane segment at 33–53 threads the bilayer; sequence IAYVLLSTVVVFTVTPGIALY. Residues 54–69 are Cytoplasmic-facing; that stretch reads YAGMVRKNSALSILTQ. The helical transmembrane segment at 70 to 90 threads the bilayer; sequence SFLVTAVVFIQWYLFGYSLAC. Residues 91 to 118 lie on the Extracellular side of the membrane; it reads SSGSSFYGTLWQGGMNHLWLEPYIPGST. A helical membrane pass occupies residues 119 to 139; it reads IPAIVYFPFGGLFAVATAQLF. The Cytoplasmic portion of the chain corresponds to 140 to 148; that stretch reads AGAMAERGR. The chain crosses the membrane as a helical span at residues 149–169; sequence LIPSLVISFLYITLVYCPQAY. The Extracellular segment spans residues 170-180; the sequence is WTWAPNGWLYT. The chain crosses the membrane as a helical span at residues 181–201; sequence LGALDFAGGGPVHISSGFAAL. Topologically, residues 202-272 are cytoplasmic; the sequence is AYSLCLGRRI…AHNPPHDAGM (71 aa). Residues 273-293 traverse the membrane as a helical segment; sequence VYIGVVLIWFAWLCFNSGTLL. The Extracellular portion of the chain corresponds to 294-299; the sequence is TVNIRT. The helical transmembrane segment at 300-320 threads the bilayer; sequence AYIMTNTLISSSFGALTWAII. At 321-327 the chain is on the cytoplasmic side; the sequence is DYIRYRK. The helical transmembrane segment at 328-348 threads the bilayer; sequence FSTIGICEGAIAGLVGITPAC. A topological domain (extracellular) is located at residue G349. A helical transmembrane segment spans residues 350 to 370; sequence FVFPWGAAAGGIVPALVCNFL. Over 371–384 the chain is Cytoplasmic; that stretch reads HDLNEWIGVDETLR. Residues 385 to 405 traverse the membrane as a helical segment; sequence VFNLHGIGGIVGSIVLGVVAH. Residues 406–432 lie on the Extracellular side of the membrane; sequence PDVAASDGATVIDGGWAVHHWKQMGYQ. A helical transmembrane segment spans residues 433-453; it reads FAGFTSVAAWSFVITAIICLL. At 454-517 the chain is on the cytoplasmic side; that stretch reads VDLVPGLHIR…NIKQEKQDEF (64 aa).

Belongs to the ammonia transporter channel (TC 1.A.11.2) family.

Its subcellular location is the membrane. Functionally, transporter for ammonium to use as a nitrogen source. The chain is Ammonium transporter 3 (amt3) from Schizosaccharomyces pombe (strain 972 / ATCC 24843) (Fission yeast).